The primary structure comprises 86 residues: Mu-theraphotoxin-Cg2a 3 (86 aa).

A signal peptide spans 1-21 (MKVSVVITLAVLGVMFVWASA). The propeptide occupies 22–50 (AELKERGSDQRDSPAWIKSMERIFQSEER). 3 disulfides stabilise this stretch: cysteine 52–cysteine 66, cysteine 59–cysteine 71, and cysteine 65–cysteine 78. At phenylalanine 84 the chain carries Phenylalanine amide.

It belongs to the neurotoxin 10 (Hwtx-1) family. 37 (Jztx-31) subfamily. In terms of tissue distribution, expressed by the venom gland.

The protein localises to the secreted. In terms of biological role, inhibits both peak current and fast inactivation of voltage-gated sodium channels (Nav) channels. Inhibits the inactivation of Nav on DRG neurons (EC(50)=1.77 uM) and peak current of cardiac myocytes (IC(50)=0.90 uM). This Chilobrachys guangxiensis (Chinese earth tiger tarantula) protein is Mu-theraphotoxin-Cg2a 3.